The sequence spans 160 residues: Ureidoglycolate lyase (160 aa).

This sequence belongs to the ureidoglycolate lyase family. Homodimer. The cofactor is Ni(2+).

It catalyses the reaction (S)-ureidoglycolate = urea + glyoxylate. Its pathway is nitrogen metabolism; (S)-allantoin degradation. In terms of biological role, catalyzes the catabolism of the allantoin degradation intermediate (S)-ureidoglycolate, generating urea and glyoxylate. Involved in the utilization of allantoin as nitrogen source. The polypeptide is Ureidoglycolate lyase (Salmonella gallinarum (strain 287/91 / NCTC 13346)).